Consider the following 118-residue polypeptide: Ribosomal silencing factor RsfS (118 aa).

This sequence belongs to the Iojap/RsfS family. Interacts with ribosomal protein uL14 (rplN).

Its subcellular location is the cytoplasm. Functionally, functions as a ribosomal silencing factor. Interacts with ribosomal protein uL14 (rplN), blocking formation of intersubunit bridge B8. Prevents association of the 30S and 50S ribosomal subunits and the formation of functional ribosomes, thus repressing translation. This Bacillus subtilis (strain 168) protein is Ribosomal silencing factor RsfS.